A 555-amino-acid polypeptide reads, in one-letter code: Carboxylic ester hydrolase (555 aa).

The N-terminal stretch at 1–19 (MELSVIALLLLGFVNFSWQ) is a signal peptide. Cysteines 86 and 107 form a disulfide. Asn-120 and Asn-144 each carry an N-linked (GlcNAc...) asparagine glycan. The active-site Acyl-ester intermediate is the Ser-211. The cysteines at positions 263 and 274 are disulfide-linked. The Charge relay system role is filled by Glu-336. Asn-369 and Asn-397 each carry an N-linked (GlcNAc...) asparagine glycan. His-459 (charge relay system) is an active-site residue. 2 N-linked (GlcNAc...) asparagine glycosylation sites follow: Asn-473 and Asn-533.

Belongs to the type-B carboxylesterase/lipase family. Post-translationally, N-glycosylated. In terms of tissue distribution, expressed in several tissues, including epidermis (at protein level), fat body (at protein level), gut (at protein level), muscle (at protein level), and venom gland (at protein level).

It is found in the secreted. It carries out the reaction a carboxylic ester + H2O = an alcohol + a carboxylate + H(+). Lipolytic agent that may be involved in distributing the venom via degradation of blood triglycerides. The recombinant protein degrades triglycerides and exhibits high lipolytic activity toward long-chain triglycerides (tested on tributyrin, trioctanoin and triolein). Does not affect mammalian cells. In Bombus ignitus (Bumblebee), this protein is Carboxylic ester hydrolase (vCaE).